The sequence spans 231 residues: Putative cobalt transport protein CbiM 1 (231 aa).

Helical transmembrane passes span 6-26 (GFLPIGWCVFWAVLAAPFLIY), 41-61 (VLPLMAVCGAFIFVVSLVDIP), 79-99 (FFGPAVTSVLGLIILVFQALL), 107-127 (TLGATAFSMAVMGPLAAWLVF), 136-156 (VPLGPAVFCAAVVANCVTYLI), and 172-192 (LTAFLAAAAVFAVVQIPISII).

This sequence belongs to the CbiM family. In terms of assembly, forms an energy-coupling factor (ECF) transporter complex composed of an ATP-binding protein (A component, CbiO), a transmembrane protein (T component, CbiQ) and 2 possible substrate-capture proteins (S components, CbiM and CbiN) of unknown stoichimetry.

The protein localises to the cell membrane. Its pathway is cofactor biosynthesis; adenosylcobalamin biosynthesis. Functionally, part of the energy-coupling factor (ECF) transporter complex CbiMNOQ involved in cobalt import. The polypeptide is Putative cobalt transport protein CbiM 1 (Methanocorpusculum labreanum (strain ATCC 43576 / DSM 4855 / Z)).